The following is a 109-amino-acid chain: Large ribosomal subunit protein uL22 (109 aa).

This sequence belongs to the universal ribosomal protein uL22 family. Part of the 50S ribosomal subunit.

Functionally, this protein binds specifically to 23S rRNA; its binding is stimulated by other ribosomal proteins, e.g. L4, L17, and L20. It is important during the early stages of 50S assembly. It makes multiple contacts with different domains of the 23S rRNA in the assembled 50S subunit and ribosome. In terms of biological role, the globular domain of the protein is located near the polypeptide exit tunnel on the outside of the subunit, while an extended beta-hairpin is found that lines the wall of the exit tunnel in the center of the 70S ribosome. The chain is Large ribosomal subunit protein uL22 from Blochmanniella pennsylvanica (strain BPEN).